Consider the following 1406-residue polypeptide: Protein crumbs homolog 1 (1406 aa).

Residues 1–25 form the signal peptide; the sequence is MALKNINYLLIFYLSFSLLIYIKNS. Residues 26–1347 are Extracellular-facing; that stretch reads FCNKNNTRCL…DDLISDIFTT (1322 aa). N-linked (GlcNAc...) asparagine glycans are attached at residues Asn30, Asn41, and Asn42. EGF-like domains lie at 30–68, 70–108, and 110–146; these read NNTR…KDCD, MKDP…TICE, and TIGS…RFCE. 20 disulfides stabilise this stretch: Cys34/Cys45, Cys39/Cys54, Cys56/Cys67, Cys74/Cys85, Cys79/Cys96, Cys98/Cys107, Cys114/Cys125, Cys119/Cys134, Cys136/Cys145, Cys152/Cys163, Cys157/Cys172, Cys174/Cys183, Cys190/Cys201, Cys195/Cys210, Cys212/Cys221, Cys228/Cys239, Cys233/Cys248, Cys250/Cys259, Cys266/Cys277, and Cys271/Cys286. An EGF-like 4; calcium-binding domain is found at 148–184; sequence DHDECASSPCQNGAVCQDGIDGYSCFCVPGYQGRHCD. An EGF-like 5; calcium-binding domain is found at 186-222; that stretch reads EVDECASDPCKNEATCLNEIGRYTCICPHNYSGVNCE. The N-linked (GlcNAc...) asparagine glycan is linked to Asn215. The region spanning 224-260 is the EGF-like 6; calcium-binding domain; the sequence is EIDECWSQPCLNGATCQDALGAYFCDCAPGFLGDHCE. The EGF-like 7; calcium-binding domain maps to 262 to 299; it reads NTDECASQPCLHGGLCVDGENRYSCNCTGSGFTGTHCE. N-linked (GlcNAc...) asparagine glycosylation is present at Asn287. 13 disulfide bridges follow: Cys288-Cys298, Cys305-Cys316, Cys310-Cys325, Cys327-Cys336, Cys343-Cys354, Cys348-Cys383, Cys385-Cys394, Cys401-Cys412, Cys406-Cys421, Cys423-Cys438, Cys445-Cys456, Cys450-Cys469, and Cys471-Cys480. EGF-like domains follow at residues 301-337 and 339-395; these read LMPL…AQCE and DLNE…IHCE. Residues Asn313 and Asn322 are each glycosylated (N-linked (GlcNAc...) asparagine). The 43-residue stretch at 397-439 folds into the EGF-like 10; calcium-binding domain; sequence DVNECSSNPCQNGGTCENLPGNYTCHCPFDNLSRTFYGGRDCS. N-linked (GlcNAc...) asparagine glycans are attached at residues Asn418, Asn427, and Asn453. The region spanning 441 to 481 is the EGF-like 11 domain; sequence ILLGCTHQQCLNNGTCIPHFQDGQHGFSCLCPSGYTGSLCE. In terms of domain architecture, Laminin G-like 1 spans 485-670; the sequence is TLSFEGDGFL…GSSLNVKAGC (186 aa). Residues Asn550, Asn561, and Asn657 are each glycosylated (N-linked (GlcNAc...) asparagine). Cystine bridges form between Cys642-Cys670, Cys676-Cys687, Cys681-Cys696, and Cys698-Cys707. Residues 672–708 form the EGF-like 12 domain; that stretch reads RKDWCESQPCQSRGRCINLWLSYQCDCHRPYEGPNCL. A Laminin G-like 2 domain is found at 714–885; the sequence is GRFGQDDSTG…PVLVNVTQGC (172 aa). 3 N-linked (GlcNAc...) asparagine glycosylation sites follow: Asn757, Asn871, and Asn880. 6 disulfide bridges follow: Cys851–Cys885, Cys891–Cys902, Cys896–Cys911, Cys913–Cys922, Cys928–Cys939, and Cys933–Cys948. EGF-like domains are found at residues 887 to 923 and 924 to 960; these read GDNS…KACE and EVQW…QSGQ. The 188-residue stretch at 950–1137 folds into the Laminin G-like 3 domain; that stretch reads ANAVFNGQSG…ISTNSVVTGC (188 aa). Asn968, Asn975, and Asn1000 each carry an N-linked (GlcNAc...) asparagine glycan. Disulfide bonds link Cys1096–Cys1137, Cys1143–Cys1154, Cys1148–Cys1163, Cys1165–Cys1174, Cys1181–Cys1191, Cys1186–Cys1200, Cys1202–Cys1211, Cys1218–Cys1229, Cys1223–Cys1238, Cys1240–Cys1249, Cys1259–Cys1274, Cys1268–Cys1283, Cys1285–Cys1294, Cys1301–Cys1312, Cys1306–Cys1321, and Cys1323–Cys1332. In terms of domain architecture, EGF-like 15 spans 1139–1175; that stretch reads QLNVCNSNPCLHGGNCEDIYSSYHCSCPLGWSGKHCE. One can recognise an EGF-like 16; calcium-binding domain in the interval 1177-1212; that stretch reads NIDECFSNPCIHGNCSDRVAAYHCTCEPGYTGVNCE. Residue Asn1190 is glycosylated (N-linked (GlcNAc...) asparagine). EGF-like domains follow at residues 1214-1250 and 1255-1295; these read DIDN…KFCR and PSTV…EWCE. Residues Asn1243, Asn1265, and Asn1273 are each glycosylated (N-linked (GlcNAc...) asparagine). One can recognise an EGF-like 19; calcium-binding domain in the interval 1297 to 1333; sequence DIDECASDPCVNGGLCQDLLNKFQCLCDVAFAGERCE. Residues 1348–1368 traverse the membrane as a helical segment; that stretch reads IGSVTVALLLILLLAIVASVV. The Cytoplasmic segment spans residues 1369 to 1406; that stretch reads TSNKRATQGTYSPSRQEKEGSRVEMWNLMPPPAMERLI. An interaction with EPB41L5 region spans residues 1370-1406; it reads SNKRATQGTYSPSRQEKEGSRVEMWNLMPPPAMERLI.

It belongs to the Crumbs protein family. Component of a complex composed of PALS1, CRB1 and EPB41L5. Within the complex, interacts (via intracellular domain) with PALS1 and EPB41L5 (via FERM domain). Forms a complex with MPP4 and PALS1. Interacts with MPDZ/MUPP1 and MPP4. In terms of processing, extensively glycosylated. Preferential expression in retina, also expressed in brain, testis, fetal brain and fetal eye. Expressed at the outer limiting membrane and apical to adherens junctions in the retina.

The protein resides in the apical cell membrane. The protein localises to the secreted. It is found in the cell projection. Its subcellular location is the cilium. It localises to the photoreceptor outer segment. The protein resides in the photoreceptor inner segment. In terms of biological role, plays a role in photoreceptor morphogenesis in the retina. May maintain cell polarization and adhesion. In Homo sapiens (Human), this protein is Protein crumbs homolog 1.